We begin with the raw amino-acid sequence, 219 residues long: Charged multivesicular body protein 5 (219 aa).

A compositionally biased stretch (basic residues) spans 1–10 (MNRLFGKAKP). A disordered region spans residues 1–21 (MNRLFGKAKPKAPPPSLTDCI). Residue Lys-7 is the site of (Microbial infection) N6-stearoyl lysine attachment. A coiled-coil region spans residues 26 to 179 (SRAESIDKKI…LGDELLADED (154 aa)). Ser-86 is subject to Phosphoserine. The interval 121-158 (KQVKIDQIEDLQDQLEDMMEDANEIQEALSRSYGTPEL) is interaction with VTA1. The disordered stretch occupies residues 188 to 219 (SAPAIPEGVPTDTKNKDGVLVDEFGLPQIPAS).

This sequence belongs to the SNF7 family. As to quaternary structure, probable peripherally associated component of the endosomal sorting required for transport complex III (ESCRT-III). ESCRT-III components are thought to multimerize to form a flat lattice on the perimeter membrane of the endosome. Several assembly forms of ESCRT-III may exist that interact and act sequentially. Interacts with VTA1; the interaction involves soluble CHMP5. Interacts with CHMP2A. Interacts with NOD2. Interacts with BROX. (Microbial infection) Stearoylated By S.flexneri N-epsilon-fatty acyltransferase IcsB, promoting S.flexneri evasion of autophagy. Post-translationally, ISGylated. Isgylation inhibits its interaction with VTA1.

It is found in the cytoplasm. Its subcellular location is the cytosol. The protein resides in the endosome membrane. It localises to the midbody. Its function is as follows. Probable peripherally associated component of the endosomal sorting required for transport complex III (ESCRT-III) which is involved in multivesicular bodies (MVBs) formation and sorting of endosomal cargo proteins into MVBs. MVBs contain intraluminal vesicles (ILVs) that are generated by invagination and scission from the limiting membrane of the endosome and mostly are delivered to lysosomes enabling degradation of membrane proteins, such as stimulated growth factor receptors, lysosomal enzymes and lipids. The MVB pathway appears to require the sequential function of ESCRT-O, -I,-II and -III complexes. ESCRT-III proteins mostly dissociate from the invaginating membrane before the ILV is released. The ESCRT machinery also functions in topologically equivalent membrane fission events, such as the terminal stages of cytokinesis and the budding of enveloped viruses (HIV-1 and other lentiviruses). ESCRT-III proteins are believed to mediate the necessary vesicle extrusion and/or membrane fission activities, possibly in conjunction with the AAA ATPase VPS4. Involved in HIV-1 p6- and p9-dependent virus release. This Homo sapiens (Human) protein is Charged multivesicular body protein 5 (CHMP5).